The sequence spans 837 residues: Periplasmic nitrate reductase (837 aa).

The tat-type signal signal peptide spans 1–31 (MKLNRRDFIKANAAAAAISAAGLSVPGAAVA). The 57-residue stretch at 37–93 (IRWDKAACRFCGTGCGVLVGTQDGRVVATQGDPDAPVNRGLNCIKGYFLSKIMYGAD) folds into the 4Fe-4S Mo/W bis-MGD-type domain. Residues Cys-44, Cys-47, Cys-51, and Cys-79 each coordinate [4Fe-4S] cluster. Mo-bis(molybdopterin guanine dinucleotide)-binding positions include Lys-81, Gln-148, Asn-173, Cys-177, 210–217 (WGSNMAEM), 241–245 (STFEH), and 260–262 (QTD). The tract at residues 308 to 329 (EKNATSNGYPDADGKPKGDTGK) is disordered. Residues 319-329 (ADGKPKGDTGK) are compositionally biased toward basic and acidic residues. Residues Met-381, Gln-385, Asn-491, 517–518 (SD), Lys-540, Asp-567, and 727–736 (TGRVLEHWHT) each bind Mo-bis(molybdopterin guanine dinucleotide). Position 803 (Phe-803) interacts with substrate. Mo-bis(molybdopterin guanine dinucleotide) contacts are provided by Asn-811 and Lys-828.

Belongs to the prokaryotic molybdopterin-containing oxidoreductase family. NasA/NapA/NarB subfamily. In terms of assembly, component of the periplasmic nitrate reductase NapAB complex composed of NapA and NapB. It depends on [4Fe-4S] cluster as a cofactor. Mo-bis(molybdopterin guanine dinucleotide) serves as cofactor. Post-translationally, predicted to be exported by the Tat system. The position of the signal peptide cleavage has not been experimentally proven.

The protein resides in the periplasm. It carries out the reaction 2 Fe(II)-[cytochrome] + nitrate + 2 H(+) = 2 Fe(III)-[cytochrome] + nitrite + H2O. Catalytic subunit of the periplasmic nitrate reductase complex NapAB. Receives electrons from NapB and catalyzes the reduction of nitrate to nitrite. This chain is Periplasmic nitrate reductase, found in Dechloromonas aromatica (strain RCB).